We begin with the raw amino-acid sequence, 593 residues long: Aspartate--tRNA(Asp/Asn) ligase (593 aa).

L-aspartate is bound at residue Glu-182. Residues 206–209 are aspartate; it reads QLFK. Residue Arg-228 participates in L-aspartate binding. ATP contacts are provided by residues 228 to 230 and Gln-237; that span reads RDE. His-455 is a binding site for L-aspartate. Glu-489 is a binding site for ATP. Residue Arg-496 coordinates L-aspartate. An ATP-binding site is contributed by 541–544; that stretch reads GLDR.

The protein belongs to the class-II aminoacyl-tRNA synthetase family. Type 1 subfamily. In terms of assembly, homodimer.

The protein resides in the cytoplasm. The enzyme catalyses tRNA(Asx) + L-aspartate + ATP = L-aspartyl-tRNA(Asx) + AMP + diphosphate. In terms of biological role, aspartyl-tRNA synthetase with relaxed tRNA specificity since it is able to aspartylate not only its cognate tRNA(Asp) but also tRNA(Asn). Reaction proceeds in two steps: L-aspartate is first activated by ATP to form Asp-AMP and then transferred to the acceptor end of tRNA(Asp/Asn). The protein is Aspartate--tRNA(Asp/Asn) ligase of Geotalea uraniireducens (strain Rf4) (Geobacter uraniireducens).